The chain runs to 358 residues: 3'(2'),5'-bisphosphate nucleotidase (358 aa).

Catalysis depends on Asp52, which acts as the Proton acceptor. The Mg(2+) site is built by Glu78, Asp140, Ile142, and Asp143. Thr145 serves as the catalytic Proton acceptor. The adenosine 3',5'-bisphosphate site is built by Thr145, His239, Ser263, Lys266, Arg280, and Asp292. AMP contacts are provided by His239, Ser263, Lys266, Arg280, and Asp292. Asp292 serves as a coordination point for Mg(2+).

This sequence belongs to the inositol monophosphatase superfamily. Requires Mg(2+) as cofactor. In terms of tissue distribution, is constitutively transcribed in both roots and shoots.

The catalysed reaction is 3'-phosphoadenylyl sulfate + H2O = adenosine 5'-phosphosulfate + phosphate. It catalyses the reaction adenosine 3',5'-bisphosphate + H2O = AMP + phosphate. It carries out the reaction adenosine 2',5'-bisphosphate + H2O = AMP + phosphate. Inhibited by Ca(2+), Li(+), and Na(+) and activated by K(+). In terms of biological role, phosphatase that converts adenosine 3'-phosphate 5'-phosphosulfate (PAPS) to adenosine 5'-phosphosulfate (APS) and 3'(2')-phosphoadenosine 5'-phosphate (PAP) to AMP. May regulate the flux of sulfur in the sulfur-activation pathway by converting PAPS to APS. Shows no activity on myo-inositol 1-phosphate, beta-glycerol phosphate, NADPH, NADP and 5'-AMP. The protein is 3'(2'),5'-bisphosphate nucleotidase of Oryza sativa (Rice).